A 552-amino-acid polypeptide reads, in one-letter code: HTH-type transcriptional regulator SgrR (552 aa).

A solute-binding region spans residues 163–493 (ELKPDLAHHW…DDLDTDAQQW (331 aa)).

Activates the small RNA gene sgrS under glucose-phosphate stress conditions as well as yfdZ. Represses its own transcription under both stress and non-stress conditions. Might act as a sensor of the intracellular accumulation of phosphoglucose by binding these molecules in its C-terminal solute-binding domain. This Pectobacterium atrosepticum (strain SCRI 1043 / ATCC BAA-672) (Erwinia carotovora subsp. atroseptica) protein is HTH-type transcriptional regulator SgrR.